Reading from the N-terminus, the 207-residue chain is Ras-related protein Rab-7a (207 aa).

T2 carries the post-translational modification N-acetylthreonine. GTP is bound by residues S17, G18, V19, G20, K21, T22, S23, S34, N35, Y37, and T40. T22 is a binding site for Mg(2+). Positions 28–41 (YVNKKFSNQYKATI) match the Switch 1 motif. Residues T40 and D63 each contribute to the Mg(2+) site. Position 66 (G66) interacts with GTP. The short motif at 67-82 (QERFQSLGVAFYRGAD) is the Switch 2 element. The residue at position 72 (S72) is a Phosphoserine. Residues N125, K126, D128, A156, and K157 each coordinate GTP. Glycyl lysine isopeptide (Lys-Gly) (interchain with G-Cter in ubiquitin) cross-links involve residues K191 and K194. S-geranylgeranyl cysteine attachment occurs at residues C205 and C207. C207 is subject to Cysteine methyl ester.

Belongs to the small GTPase superfamily. Rab family. In terms of assembly, interacts with NTRK1/TRKA. Interacts with RILP. Interacts with PSMA7. Interacts with RNF115. Interacts with FYCO1. Interacts with the PIK3C3/VPS34-PIK3R4 complex. The GTP-bound form interacts with OSBPL1A. The GTP-bound form interacts with RAC1. Interacts with CLN3. Interacts with CHM, the substrate-binding subunit of the Rab geranylgeranyltransferase complex. Interacts with C9orf72. Does not interact with HPS4 and the BLOC-3 complex (heterodimer of HPS1 and HPS4). Interacts with CLN5. Interacts with PLEKHM1 (via N- and C-terminus). Interacts with PRPH; the interaction is direct. Interacts with VPS13A. The GDP-bound form interacts with RIMOC1. Interacts with the MON1A-CCZ1B complex and this interaction is enhanced in the presence of RIMOC1. Interacts with VPS39 and VPS41. Forms a ternary complex with LAMP2 and RUFY4; the interaction with LAMP2 is mediated by RUFY4 (via RUN and coiled coil domains). Requires Mg(2+) as cofactor. Deubiquitination at Lys-191 and Lys-194 by USP32. Post-translationally, phosphorylated at Ser-72 by LRRK1; phosphorylation is dependent on protein kinase C (PKC) activation of LRRK1. In terms of processing, prenylated. Prenylation is required for association with cellular membranes.

Its subcellular location is the cytoplasmic vesicle. The protein localises to the phagosome membrane. The protein resides in the late endosome membrane. It is found in the lysosome membrane. It localises to the melanosome membrane. Its subcellular location is the autophagosome membrane. The protein localises to the lipid droplet. The protein resides in the endosome membrane. It is found in the mitochondrion membrane. The enzyme catalyses GTP + H2O = GDP + phosphate + H(+). Regulated by guanine nucleotide exchange factors (GEFs) which promote the exchange of bound GDP for free GTP. Regulated by GTPase activating proteins (GAPs) which increase the GTP hydrolysis activity. Inhibited by GDP dissociation inhibitors (GDIs). Functionally, the small GTPases Rab are key regulators of intracellular membrane trafficking, from the formation of transport vesicles to their fusion with membranes. Rabs cycle between an inactive GDP-bound form and an active GTP-bound form that is able to recruit to membranes different sets of downstream effectors directly responsible for vesicle formation, movement, tethering and fusion. In its active state, RAB7A binds to a variety of effector proteins playing a key role in the regulation of endo-lysosomal trafficking. Governs early-to-late endosomal maturation, microtubule minus-end as well as plus-end directed endosomal migration and positioning, and endosome-lysosome transport through different protein-protein interaction cascades. Also plays a central role in growth-factor-mediated cell signaling, nutrient-transporter-mediated nutrient uptake, neurotrophin transport in the axons of neurons and lipid metabolism. Also involved in regulation of some specialized endosomal membrane trafficking, such as maturation of melanosomes, pathogen-induced phagosomes (or vacuoles) and autophagosomes. Plays a role in the maturation and acidification of phagosomes that engulf pathogens, such as S.aureus and Mycobacteria. Plays a role in the fusion of phagosomes with lysosomes. In concert with RAC1, plays a role in regulating the formation of RBs (ruffled borders) in osteoclasts. Controls the endosomal trafficking and neurite outgrowth signaling of NTRK1/TRKA. Regulates the endocytic trafficking of the EGF-EGFR complex by regulating its lysosomal degradation. Involved in the ADRB2-stimulated lipolysis through lipophagy, a cytosolic lipase-independent autophagic pathway. Required for the exosomal release of SDCBP, CD63 and syndecan. Required for vesicular trafficking and cell surface expression of ACE2. May play a role in PRPH neuronal intermediate filament assembly. The sequence is that of Ras-related protein Rab-7a (RAB7A) from Pongo abelii (Sumatran orangutan).